A 409-amino-acid polypeptide reads, in one-letter code: POU domain, class 4, transcription factor 2 (409 aa).

The interval 26–93 (YSALHSTSPG…SEAMRRACLP (68 aa)) is disordered. Over residues 31-52 (STSPGSSAPIAPSASSPSSSSN) the composition is skewed to low complexity. Over residues 53–69 (AGGGGGGGGGGGGGGGR) the composition is skewed to gly residues. Residues 91–237 (CLPTPPSNIF…MHQAALSMAH (147 aa)) form a required for transcriptional activation region. Positions 110–119 (RAEALAAVDI) match the POU-IV box motif. The segment covering 153–166 (AASSSSVPISHPSA) has biased composition (low complexity). The segment at 153–188 (AASSSSVPISHPSALAGTHHHHHHHHHHHHQPHQAL) is disordered. Residues 170-184 (THHHHHHHHHHHHQP) show a composition bias toward basic residues. The Nuclear speckle targeting signal motif lies at 171-185 (HHHHHHHHHHHHQPH). The interval 238-409 (AHGLPSHMGC…QKRMKYSAGI (172 aa)) is required for DNA-binding and transcriptional repression. A POU-specific domain is found at 250-327 (DVDADPRDLE…ILQAWLEEAE (78 aa)). The homeobox DNA-binding region spans 345–404 (KKRKRTSIAAPEKRSLEAYFAIQPRPSSEKIAAIAEKLDLKKNVVRVWFCNQRQKQKRMK).

Belongs to the POU transcription factor family. Class-4 subfamily. As to quaternary structure, interacts with POU4F1; this interaction inhibits both POU4F1 DNA-binding and transcriptional activities. Interacts (C-terminus) with ESR1 (via DNA-binding domain); this interaction increases the estrogen receptor ESR1 transcriptional activity in a DNA- and ligand 17-beta-estradiol-independent manner. Interacts (via C-terminus) with TP53 (via N-terminus). Interacts with DLX1 (via homeobox DNA-binding domain); this interaction suppresses DLX1-mediated transcriptional activity in postnatal retina enhancing retinal ganglion cell (RGC) differentiation. Interacts with DLX2 (via homeobox DNA-binding domain); this interaction enhances RGC differentiation. Interacts (via C-terminus) with ISL1 (via C-terminus). Interacts with ISL2. Interacts with LHX2. In terms of tissue distribution, expressed in the brain. Expressed in the ganglion cell layer of the retina.

It is found in the nucleus. It localises to the nucleus speckle. The protein localises to the cytoplasm. Functionally, tissue-specific DNA-binding transcription factor involved in the development and differentiation of target cells. Functions either as activator or repressor modulating the rate of target gene transcription through RNA polymerase II enzyme in a promoter-dependent manner. Binds to the consensus octamer motif 5'-AT[A/T]A[T/A]T[A/T]A-3' of promoter of target genes. Plays a fundamental role in the gene regulatory network essential for retinal ganglion cell (RGC) differentiation. Binds to an octamer site to form a ternary complex with ISL1; cooperates positively with ISL1 and ISL2 to potentiate transcriptional activation of RGC target genes being involved in RGC fate commitment in the developing retina and RGC axon formation and pathfinding. Inhibits DLX1 and DLX2 transcriptional activities preventing DLX1- and DLX2-mediated ability to promote amacrine cell fate specification. In cooperation with TP53 potentiates transcriptional activation of BAX promoter activity increasing neuronal cell apoptosis. Negatively regulates BAX promoter activity in the absence of TP53. Acts as a transcriptional coactivator via its interaction with the transcription factor ESR1 by enhancing its effect on estrogen response element (ERE)-containing promoter. Antagonizes the transcriptional stimulatory activity of POU4F1 by preventing its binding to an octamer motif. Involved in TNFSF11-mediated terminal osteoclast differentiation. This is POU domain, class 4, transcription factor 2 from Homo sapiens (Human).